Here is a 371-residue protein sequence, read N- to C-terminus: 4-hydroxy-3-methylbut-2-en-1-yl diphosphate synthase (flavodoxin) (371 aa).

Cys-272, Cys-275, Cys-307, and Glu-314 together coordinate [4Fe-4S] cluster.

This sequence belongs to the IspG family. Requires [4Fe-4S] cluster as cofactor.

It catalyses the reaction (2E)-4-hydroxy-3-methylbut-2-enyl diphosphate + oxidized [flavodoxin] + H2O + 2 H(+) = 2-C-methyl-D-erythritol 2,4-cyclic diphosphate + reduced [flavodoxin]. Its pathway is isoprenoid biosynthesis; isopentenyl diphosphate biosynthesis via DXP pathway; isopentenyl diphosphate from 1-deoxy-D-xylulose 5-phosphate: step 5/6. In terms of biological role, converts 2C-methyl-D-erythritol 2,4-cyclodiphosphate (ME-2,4cPP) into 1-hydroxy-2-methyl-2-(E)-butenyl 4-diphosphate. This Magnetococcus marinus (strain ATCC BAA-1437 / JCM 17883 / MC-1) protein is 4-hydroxy-3-methylbut-2-en-1-yl diphosphate synthase (flavodoxin).